Reading from the N-terminus, the 429-residue chain is Inner membrane transport protein RhmT (429 aa).

The Cytoplasmic portion of the chain corresponds to 1-16 (MSTALLDAVVKKNRVR). Residues 17–37 (LIPFMLALYVLAFLDRSNIGF) traverse the membrane as a helical segment. The Periplasmic portion of the chain corresponds to 38-54 (AKQTYQIDTGLSNEAYA). A helical membrane pass occupies residues 55 to 75 (LGAGIFFVVYAFLGVPANLLM). Topologically, residues 76-81 (RKLGAR) are cytoplasmic. The helical transmembrane segment at 82 to 102 (TWIGTTTLLWGFLSAAMAWAD) threads the bilayer. Residues 103–143 (TEAKFLIVRTLLRAAEAGFFPGMIYLTSQWFPQRNRASIMG) lie on the Periplasmic side of the membrane. A helical membrane pass occupies residues 144–164 (LFYMGAPLALTLGSPLSGALL). The Cytoplasmic portion of the chain corresponds to 165-174 (EMHGFMGHPG). A helical membrane pass occupies residues 175-195 (WFWMFVIEGLLAVGAGVFTFF). Topologically, residues 196–242 (WLDDTPEQARFLSKQEKTLLINQLASEEQQKVTSRLSDALRNGRVWQ) are periplasmic. The chain crosses the membrane as a helical span at residues 243–263 (LAIIYLTIQVAVYGLIFFLPT). Residues 264 to 274 (QVAALLGTKVG) lie on the Cytoplasmic side of the membrane. Residues 275–295 (FTASVVTAIPWVAALFGTWLI) traverse the membrane as a helical segment. At 296–324 (PRYSDKTGERRNVAALTLLAAGIGIGLSG) the chain is on the periplasmic side. Residues 325–345 (LLSPVMAIVALCVAAIGFIAV) traverse the membrane as a helical segment. At 346-361 (QPVFWTMPTQLLSGTA) the chain is on the cytoplasmic side. Residues 362–382 (LAAGIGFVNLFGAVGGFIAPI) traverse the membrane as a helical segment. Residues 383–394 (LRVKAETLFASD) lie on the Periplasmic side of the membrane. A helical membrane pass occupies residues 395-415 (AAGLLTLAAVAVIGSLIIFTL). At 416–429 (RVNRTVAQTDVAHH) the chain is on the cytoplasmic side.

Belongs to the major facilitator superfamily. Phthalate permease family.

Its subcellular location is the cell inner membrane. The protein is Inner membrane transport protein RhmT (rhmT) of Escherichia coli (strain K12).